Reading from the N-terminus, the 629-residue chain is tRNA uridine 5-carboxymethylaminomethyl modification enzyme MnmG (629 aa).

13–18 lines the FAD pocket; sequence GGGHAG. NAD(+) is bound at residue 273–287; sequence GPRYCPSIEDKIHRF.

Belongs to the MnmG family. Homodimer. Heterotetramer of two MnmE and two MnmG subunits. Requires FAD as cofactor.

The protein resides in the cytoplasm. In terms of biological role, NAD-binding protein involved in the addition of a carboxymethylaminomethyl (cmnm) group at the wobble position (U34) of certain tRNAs, forming tRNA-cmnm(5)s(2)U34. This Shewanella baltica (strain OS195) protein is tRNA uridine 5-carboxymethylaminomethyl modification enzyme MnmG.